Consider the following 1268-residue polypeptide: Vigilin (1268 aa).

S2 carries the N-acetylserine modification. At T8 the chain carries Phosphothreonine. Phosphoserine is present on residues S11, S31, and S35. KH domains are found at residues 158–229 (PKEH…RLEV), 230–302 (EKAF…AVEV), 303–371 (KKSQ…SVAA), 372–442 (PSWL…EINI), 443–514 (DHKF…DLII), 515–588 (EQRF…SVPI), 589–660 (FKQF…EVSI), 661–734 (PAKL…DIRA), 735–807 (KPEY…SMLV), 808–880 (DPKH…ECAI), 881–979 (PQKF…EVEV), 980–1059 (PFDL…SVTV), 1060–1134 (DPKY…DVPL), and 1135–1209 (DHRV…ALQV). Phosphothreonine is present on residues T295 and T296. S317 is modified (phosphoserine). Y437 is subject to Phosphotyrosine. At S645 the chain carries Phosphoserine. The disordered stretch occupies residues 914-944 (ENAVHSTEPVVQENGDEAGEGREAKDCDPGS). A compositionally biased stretch (basic and acidic residues) spans 932–944 (GEGREAKDCDPGS). Residue K991 is modified to N6-acetyllysine. Residues 1233-1268 (WTASSSEKAPDMSSSEEFPSFGAQVAPKTLPWGPKR) are disordered. Positions 1234-1249 (TASSSEKAPDMSSSEE) are enriched in polar residues. S1247 and S1252 each carry phosphoserine.

Its subcellular location is the cytoplasm. The protein localises to the nucleus. Its function is as follows. Appears to play a role in cell sterol metabolism. It may function to protect cells from over-accumulation of cholesterol. The sequence is that of Vigilin (HDLBP) from Homo sapiens (Human).